The chain runs to 497 residues: Glycerol kinase (497 aa).

Threonine 12 lines the ADP pocket. The ATP site is built by threonine 12, threonine 13, and serine 14. Threonine 12 is a binding site for sn-glycerol 3-phosphate. Arginine 16 is an ADP binding site. Sn-glycerol 3-phosphate-binding residues include arginine 82, glutamate 83, tyrosine 134, and aspartate 243. Arginine 82, glutamate 83, tyrosine 134, aspartate 243, and glutamine 244 together coordinate glycerol. The ADP site is built by threonine 265 and glycine 308. Residues threonine 265, glycine 308, glutamine 312, and glycine 409 each contribute to the ATP site. ADP contacts are provided by glycine 409 and asparagine 413.

Belongs to the FGGY kinase family. In terms of assembly, homotetramer and homodimer (in equilibrium).

The enzyme catalyses glycerol + ATP = sn-glycerol 3-phosphate + ADP + H(+). It functions in the pathway polyol metabolism; glycerol degradation via glycerol kinase pathway; sn-glycerol 3-phosphate from glycerol: step 1/1. With respect to regulation, activated by phosphorylation and inhibited by fructose 1,6-bisphosphate (FBP). Its function is as follows. Key enzyme in the regulation of glycerol uptake and metabolism. Catalyzes the phosphorylation of glycerol to yield sn-glycerol 3-phosphate. This is Glycerol kinase from Thermoanaerobacter pseudethanolicus (strain ATCC 33223 / 39E) (Clostridium thermohydrosulfuricum).